The sequence spans 119 residues: Large ribosomal subunit protein bL20 (119 aa).

The protein belongs to the bacterial ribosomal protein bL20 family.

Functionally, binds directly to 23S ribosomal RNA and is necessary for the in vitro assembly process of the 50S ribosomal subunit. It is not involved in the protein synthesizing functions of that subunit. In Vesicomyosocius okutanii subsp. Calyptogena okutanii (strain HA), this protein is Large ribosomal subunit protein bL20.